We begin with the raw amino-acid sequence, 404 residues long: MQTMKTKVAIIGSGPAGLLLGQLLYKAGIEHVIVEQRSADYVASRIRAGILEQVSVDLLEQAGVDQNLKEKGLPHSGIEILTNGQKFRVDLSALTQGKQVTVYGQTEVTKDLMQAREQAGLCSFYESNDVQIHDFYNAPKVTFESNGTHYQIECDFIAGCDGYHGVCRASVPQDKIKTFEKVYPFGWLGVLADVPPVADELIYVQSERGFALCSMRSETRSRYYIQVPLTDHVENWSDDQFWEELKNRLDPESCEKLVTGPSIEKSIAPLRSFVTEPMRFGKLFLAGDAAHIVPPTGAKGLNLAASDIAYLSSALIEFYTQGSEQGIDQYSEKCLQRVWKAERFSWWMTHLLHRFETESEFDHKIKQAELSYILGSTAGQTTLAENYVGLPYEIKSLDYLKHAS.

FAD contacts are provided by residues glutamate 35, 45-50 (RIRAGI), and glutamine 105. Substrate contacts are provided by residues tyrosine 203, 214-216 (SMR), and tyrosine 224. Aspartate 288 serves as a coordination point for FAD. Residue proline 295 coordinates substrate. Position 301–302 (301–302 (LN)) interacts with FAD.

This sequence belongs to the aromatic-ring hydroxylase family. As to quaternary structure, homodimer. The cofactor is FAD.

The catalysed reaction is 4-hydroxybenzoate + NADPH + O2 + H(+) = 3,4-dihydroxybenzoate + NADP(+) + H2O. It participates in aromatic compound metabolism; benzoate degradation via hydroxylation; 3,4-dihydroxybenzoate from benzoate: step 2/2. Its function is as follows. Catalyzes the incorporation of an atom of dioxygen into p-hydroxybenzoate (p-OHB) to form 3,4-dihydroxybenzoate (3,4DOHB). The reaction occurs in two parts: reduction of the flavin adenine dinucleotide (FAD) in the enzyme by reduced nicotinamide adenine dinucleotide phosphate (NADPH) in response to binding p-hydroxybenzoate to the enzyme and oxidation of reduced FAD with oxygen to form a hydroperoxide, which then oxygenates p-hydroxybenzoate. In Acinetobacter baylyi (strain ATCC 33305 / BD413 / ADP1), this protein is p-hydroxybenzoate hydroxylase (pobA).